The primary structure comprises 420 residues: Glycerol-3-phosphate dehydrogenase [NAD(+)] 2, chloroplastic (420 aa).

Residues 1–45 (MAASVQPACLDLHFSGKHPPLLKHNAIIVRCVSSPNVIPEADSIS) constitute a chloroplast transit peptide. Residues 94–99 (GGGSFG), Phe-171, Lys-194, and Ala-228 each bind NAD(+). Lys-194 serves as a coordination point for substrate. Lys-279 serves as the catalytic Proton acceptor. NAD(+) is bound by residues Arg-343 and Glu-369. Substrate is bound at residue 343-344 (RN).

The protein belongs to the NAD-dependent glycerol-3-phosphate dehydrogenase family.

Its subcellular location is the plastid. It is found in the chloroplast. It carries out the reaction sn-glycerol 3-phosphate + NAD(+) = dihydroxyacetone phosphate + NADH + H(+). It functions in the pathway membrane lipid metabolism; glycerophospholipid metabolism. Required to supply glycerol-3-phosphate in the chloroplast for the synthesis of glycerolipids. Required for activation of systemic acquired resistance (SAR). Provision of glycerol-3-phosphate may be involved in generating lipid signals necessary for mediating defense responses and SAR. In Arabidopsis thaliana (Mouse-ear cress), this protein is Glycerol-3-phosphate dehydrogenase [NAD(+)] 2, chloroplastic (GLY1).